The following is a 477-amino-acid chain: Probable periplasmic serine endoprotease DegP-like (477 aa).

An N-terminal signal peptide occupies residues 1–27 (MSIPRLKSYLMMFAAVLMLGQVLTAQA). Residues His117, Asp147, and Ser220 each act as charge relay system in the active site. Residues 218-220 (GNS) and 275-279 (LGVVI) contribute to the substrate site. PDZ domains lie at 264–355 (LKKD…IRNG) and 361–466 (DISV…LRQG).

The protein belongs to the peptidase S1C family.

The protein resides in the periplasm. It catalyses the reaction Acts on substrates that are at least partially unfolded. The cleavage site P1 residue is normally between a pair of hydrophobic residues, such as Val-|-Val.. Functionally, might be efficient in the degradation of transiently denatured and unfolded proteins which accumulate in the periplasm following stress conditions. In Pseudomonas putida (strain ATCC 700007 / DSM 6899 / JCM 31910 / BCRC 17059 / LMG 24140 / F1), this protein is Probable periplasmic serine endoprotease DegP-like.